Reading from the N-terminus, the 40-residue chain is Dolichyl-diphosphooligosaccharide--protein glycosyltransferase subunit 4 (40 aa).

Over 1–4 (MITD) the chain is Lumenal. A helical membrane pass occupies residues 5–25 (VQLAIFSNVLGVFLFLLVVAY). Topologically, residues 26 to 40 (HYINANTGKSSIKNK) are cytoplasmic.

Belongs to the OST4 family. Component of the oligosaccharyltransferase (OST) complex.

It localises to the endoplasmic reticulum membrane. Its function is as follows. Subunit of the oligosaccharyl transferase (OST) complex that catalyzes the initial transfer of a defined glycan (Glc(3)Man(9)GlcNAc(2) in eukaryotes) from the lipid carrier dolichol-pyrophosphate to an asparagine residue within an Asn-X-Ser/Thr consensus motif in nascent polypeptide chains, the first step in protein N-glycosylation. N-glycosylation occurs cotranslationally and the complex associates with the Sec61 complex at the channel-forming translocon complex that mediates protein translocation across the endoplasmic reticulum (ER). All subunits are required for a maximal enzyme activity. The sequence is that of Dolichyl-diphosphooligosaccharide--protein glycosyltransferase subunit 4 from Drosophila mojavensis (Fruit fly).